A 768-amino-acid polypeptide reads, in one-letter code: Ribosomal RNA large subunit methyltransferase K/L (768 aa).

Positions 60 to 175 (DLYKICLWSR…DKQAELYLDL (116 aa)) constitute a THUMP domain.

It belongs to the methyltransferase superfamily. RlmKL family.

The protein resides in the cytoplasm. The enzyme catalyses guanosine(2445) in 23S rRNA + S-adenosyl-L-methionine = N(2)-methylguanosine(2445) in 23S rRNA + S-adenosyl-L-homocysteine + H(+). It catalyses the reaction guanosine(2069) in 23S rRNA + S-adenosyl-L-methionine = N(2)-methylguanosine(2069) in 23S rRNA + S-adenosyl-L-homocysteine + H(+). In terms of biological role, specifically methylates the guanine in position 2445 (m2G2445) and the guanine in position 2069 (m7G2069) of 23S rRNA. The sequence is that of Ribosomal RNA large subunit methyltransferase K/L from Psychrobacter arcticus (strain DSM 17307 / VKM B-2377 / 273-4).